A 79-amino-acid chain; its full sequence is uncharacterized protein (79 aa).

The protein belongs to the BolA/IbaG family.

This is an uncharacterized protein from Buchnera aphidicola subsp. Baizongia pistaciae (strain Bp).